Here is a 156-residue protein sequence, read N- to C-terminus: Sec-independent protein translocase protein TatB (156 aa).

The helical transmembrane segment at 2–22 (FSSVGWGEIFLLVVVGLVVIG) threads the bilayer. Positions 100–156 (KIMAEGTEGEAQRNKQAADNNANVVERPADGSTARPTQNDPKDGPNYSGGVSWTDII) are disordered. Residues 113 to 122 (NKQAADNNAN) are compositionally biased toward polar residues.

The protein belongs to the TatB family. As to quaternary structure, the Tat system comprises two distinct complexes: a TatABC complex, containing multiple copies of TatA, TatB and TatC subunits, and a separate TatA complex, containing only TatA subunits. Substrates initially bind to the TatABC complex, which probably triggers association of the separate TatA complex to form the active translocon.

It localises to the cell membrane. Part of the twin-arginine translocation (Tat) system that transports large folded proteins containing a characteristic twin-arginine motif in their signal peptide across membranes. Together with TatC, TatB is part of a receptor directly interacting with Tat signal peptides. TatB may form an oligomeric binding site that transiently accommodates folded Tat precursor proteins before their translocation. The chain is Sec-independent protein translocase protein TatB from Corynebacterium glutamicum (strain ATCC 13032 / DSM 20300 / JCM 1318 / BCRC 11384 / CCUG 27702 / LMG 3730 / NBRC 12168 / NCIMB 10025 / NRRL B-2784 / 534).